The sequence spans 554 residues: Eukaryotic translation initiation factor 3 subunit D-2 (554 aa).

The interval Gln-291–Pro-305 is RNA gate. Positions Asn-530–Asn-554 are disordered.

This sequence belongs to the eIF-3 subunit D family. As to quaternary structure, component of the eukaryotic translation initiation factor 3 (eIF-3) complex. The eIF-3 complex interacts with pix.

It is found in the cytoplasm. In terms of biological role, mRNA cap-binding component of the eukaryotic translation initiation factor 3 (eIF-3) complex, which is involved in protein synthesis of a specialized repertoire of mRNAs and, together with other initiation factors, stimulates binding of mRNA and methionyl-tRNAi to the 40S ribosome. The eIF-3 complex specifically targets and initiates translation of a subset of mRNAs involved in cell proliferation. In the eIF-3 complex, eif3d specifically recognizes and binds the 7-methylguanosine cap of a subset of mRNAs. In Drosophila mojavensis (Fruit fly), this protein is Eukaryotic translation initiation factor 3 subunit D-2.